A 465-amino-acid chain; its full sequence is 23S rRNA (uracil(1939)-C(5))-methyltransferase RlmD (465 aa).

The interval methionine 1–alanine 22 is disordered. A TRAM domain is found at proline 16 to aspartate 80. [4Fe-4S] cluster-binding residues include cysteine 93, cysteine 99, cysteine 102, and cysteine 181. 6 residues coordinate S-adenosyl-L-methionine: glutamine 289, phenylalanine 318, asparagine 323, glutamate 339, asparagine 367, and aspartate 388. The Nucleophile role is filled by cysteine 421.

The protein belongs to the class I-like SAM-binding methyltransferase superfamily. RNA M5U methyltransferase family. RlmD subfamily.

The enzyme catalyses uridine(1939) in 23S rRNA + S-adenosyl-L-methionine = 5-methyluridine(1939) in 23S rRNA + S-adenosyl-L-homocysteine + H(+). In terms of biological role, catalyzes the formation of 5-methyl-uridine at position 1939 (m5U1939) in 23S rRNA. The sequence is that of 23S rRNA (uracil(1939)-C(5))-methyltransferase RlmD from Burkholderia ambifaria (strain ATCC BAA-244 / DSM 16087 / CCUG 44356 / LMG 19182 / AMMD) (Burkholderia cepacia (strain AMMD)).